Reading from the N-terminus, the 919-residue chain is Valine--tRNA ligase (919 aa).

The short motif at 66 to 76 (PNVTGQLHMGH) is the 'HIGH' region element. A 'KMSKS' region motif is present at residues 562–566 (KMSKS). Residue lysine 565 participates in ATP binding. A coiled-coil region spans residues 852–919 (TVDKEAERKR…RISARLEELK (68 aa)).

The protein belongs to the class-I aminoacyl-tRNA synthetase family. ValS type 1 subfamily. Monomer.

It is found in the cytoplasm. It carries out the reaction tRNA(Val) + L-valine + ATP = L-valyl-tRNA(Val) + AMP + diphosphate. Catalyzes the attachment of valine to tRNA(Val). As ValRS can inadvertently accommodate and process structurally similar amino acids such as threonine, to avoid such errors, it has a 'posttransfer' editing activity that hydrolyzes mischarged Thr-tRNA(Val) in a tRNA-dependent manner. This is Valine--tRNA ligase from Corynebacterium diphtheriae (strain ATCC 700971 / NCTC 13129 / Biotype gravis).